We begin with the raw amino-acid sequence, 769 residues long: MKPENGAATWHPAKRSCLGRLTTLETLLLVFLGLLITALLSVLFLWLWVLDGYKTFTDGRPIYPLPFENSSVAVDRSAKNHNDVVCTSRECVRLAGFLAENLNSKINPCEDFYEFACGNYGLNKNLPANKPLRHTISDVQSRLNKQVKSMLQSPISANEKPWDKVAKGYYQKCLDEEELESTGVEAMRDIAKRIGGWPTLEGDKWQEWSHSWEEQIALVLNLTGVNAVILEMAVTHDPSNSSRSVIELDQPKWGAGSRYPYLSGANDPMLRNYTTLMKMTAVALGADPAIAEKEMNEAMEFELKLVNFSADDMVRRDPERGNNRFELWQLKSVFPFINFEKYLKTVFKELVALSPNHTVIVREIDYFVGIQHVLQSTPKRVLANYISWRLVQGFSPFLPPSAREPFYQFKANQTGMFNSPPPDRWEDCVTLSVIMMDMPVGRLFVENFFEKERAMKKMTELTSYLKNEFIKQLHVLDWMDEITRRRAISKANMIEYKSGFPMVLFNDTWMEKNWGMIIKPREYLLHLTIRVKLVRFTEELLRLDQPLDRSMWFQSPAQVDAYYAPNNNEMIFPAGIMQFPFLTLGVPNYITYGMVGAVIGHEVSHAFDDQGGQYDEMGNLNDWWDAETEEKFIEKTRCFVRQYENVHVVEADIHLNGQLSLGENIADNGGVKTAFNAYKAWKSNTTGISEPALPGFQNFTSQQMFFLAYANNWCSLVRPKHYIQIILTDVHAPSKYRAMIPLQNRPEFAKAFQCPIGSPMNPERKCQVW.

At M1–T26 the chain is on the cytoplasmic side. Residues L27 to L47 form a helical; Signal-anchor for type II membrane protein membrane-spanning segment. Residues W48–W769 lie on the Extracellular side of the membrane. An N-linked (GlcNAc...) asparagine glycan is attached at N69. The region spanning V85–W769 is the Peptidase M13 domain. 5 cysteine pairs are disulfide-bonded: C86/C91, C109/C754, C117/C714, C173/C428, and C638/C766. 7 N-linked (GlcNAc...) asparagine glycosylation sites follow: N221, N240, N272, N307, N356, N412, and N506. H601 contributes to the Zn(2+) binding site. E602 is a catalytic residue. The Zn(2+) site is built by H605 and E663. D667 functions as the Proton donor in the catalytic mechanism. 2 N-linked (GlcNAc...) asparagine glycosylation sites follow: N684 and N698.

Belongs to the peptidase M13 family. It depends on Zn(2+) as a cofactor.

It is found in the cell membrane. In terms of biological role, probable cell surface protease. This Caenorhabditis elegans protein is Neprilysin-21 (nep-21).